Consider the following 97-residue polypeptide: Mitochondrial import inner membrane translocase subunit Tim8 A (97 aa).

A Twin CX3C motif motif is present at residues 43-66 (CWEKCMDKPGPKLDSRAEACFVNC). 2 disulfides stabilise this stretch: Cys-43-Cys-66 and Cys-47-Cys-62. Phosphoserine occurs at positions 57, 87, 94, and 96.

It belongs to the small Tim family. In terms of assembly, heterohexamer; composed of 3 copies of TIMM8A and 3 copies of TIMM13, named soluble 70 kDa complex. Associates with the TIM22 complex, whose core is composed of TIMM22. Present at high level in liver and brain, and at lower level in muscle and heart. In CNS sections, it is predominantly present in the soma and the dendritic portion of the Purkinje cells of the cerebellum, but not in the glial cells. Scattered expression also is also detected in the brain stem, olfactory bulb, substantia nigra, hippocampus and striatum (at protein level). Ubiquitously expressed.

It localises to the mitochondrion inner membrane. Mitochondrial intermembrane chaperone that participates in the import and insertion of some multi-pass transmembrane proteins into the mitochondrial inner membrane. Also required for the transfer of beta-barrel precursors from the TOM complex to the sorting and assembly machinery (SAM complex) of the outer membrane. Acts as a chaperone-like protein that protects the hydrophobic precursors from aggregation and guide them through the mitochondrial intermembrane space. The TIMM8-TIMM13 complex mediates the import of proteins such as TIMM23, SLC25A12/ARALAR1 and SLC25A13/ARALAR2, while the predominant TIMM9-TIMM10 70 kDa complex mediates the import of much more proteins. The chain is Mitochondrial import inner membrane translocase subunit Tim8 A (Timm8a1) from Mus musculus (Mouse).